A 407-amino-acid chain; its full sequence is Protein arginine N-methyltransferase 2 (407 aa).

The 222-residue stretch at T186–A407 folds into the RMT2 domain. Residues Y193, M223, F246–I251, E267–H269, W294–Q295, and D315 each bind S-adenosyl-L-methionine.

Belongs to the class I-like SAM-binding methyltransferase superfamily. RMT2 methyltransferase family. As to quaternary structure, monomer.

The protein localises to the cytoplasm. It is found in the nucleus. Functionally, S-adenosyl-L-methionine-dependent protein-arginine N-methyltransferase that methylates the delta-nitrogen atom of arginine residues to form N5-methylarginine (type IV) in target proteins. Monomethylates ribosomal protein L12. The chain is Protein arginine N-methyltransferase 2 from Kluyveromyces lactis (strain ATCC 8585 / CBS 2359 / DSM 70799 / NBRC 1267 / NRRL Y-1140 / WM37) (Yeast).